The primary structure comprises 156 residues: Small ribosomal subunit protein uS7 (156 aa).

This sequence belongs to the universal ribosomal protein uS7 family. Part of the 30S ribosomal subunit. Contacts proteins S9 and S11.

Its function is as follows. One of the primary rRNA binding proteins, it binds directly to 16S rRNA where it nucleates assembly of the head domain of the 30S subunit. Is located at the subunit interface close to the decoding center, probably blocks exit of the E-site tRNA. The chain is Small ribosomal subunit protein uS7 from Marinobacter nauticus (strain ATCC 700491 / DSM 11845 / VT8) (Marinobacter aquaeolei).